Here is a 514-residue protein sequence, read N- to C-terminus: Carboxysome shell carbonic anhydrase (514 aa).

Residues 1–144 (MNTRNTRSKQ…LTAATEQFSR (144 aa)) form an N-terminal domain region. A catalytic domain region spans residues 151–397 (DDSASAIGFF…GRYPPNDIGH (247 aa)). Cys173 contacts Zn(2+). Residue Asp175 is the Proton acceptor of the active site. 2 residues coordinate Zn(2+): His242 and Cys253. A C-terminal domain region spans residues 398–514 (AERYISVGDG…GSPIEEVASA (117 aa)).

It belongs to the beta-class carbonic anhydrase family. CsoSCA subfamily. In terms of assembly, homodimer, may form filaments. It depends on Zn(2+) as a cofactor.

It localises to the carboxysome. It catalyses the reaction hydrogencarbonate + H(+) = CO2 + H2O. Carbonic anhydrase activity is inhibited by ethoxyzolamide, dithiothreitol, cyanide, and divalent metal chelators dipicolinic acid and nitrilotriacetic acid. In terms of biological role, reversible hydration of carbon dioxide. Essential for chemolithotrophic carbon dioxide fixation, supplies CO(2) to RuBisCO (ribulose bisphosphate carboxylase, cbbL-cbbS) in the carboxysome. There are estimated to be 40 CsoSCA dimers per carboxysome. Its function is as follows. Unlike beta-carboxysomes, alpha-carboxysomes (Cb) can form without cargo protein. CsoS2 is essential for Cb formation and is also capable of targeting foreign proteins to the Cb. The Cb shell assembles with the aid of CsoS2; CsoS1A, CsoS1B and CsoS1C form the majority of the shell while CsoS4A and CsoS4B form vertices. CsoS1D forms pseudohexamers that probably control metabolite flux into and out of the shell. In Halothiobacillus neapolitanus (strain ATCC 23641 / c2) (Thiobacillus neapolitanus), this protein is Carboxysome shell carbonic anhydrase.